The primary structure comprises 247 residues: PsbP domain-containing protein 3, chloroplastic (247 aa).

The N-terminal 26 residues, 1–26, are a transit peptide targeting the chloroplast; the sequence is MAAISPWLSSPQSFSNPRVTITDSRR. The transit peptide at 27-80 directs the protein to the thylakoid; the sequence is CSSISAAISVLDSSNEEQHRISSRDHVGMKRRDVMLQIASSVFFLPLAISPAFA.

It belongs to the PsbP family.

It is found in the plastid. The protein localises to the chloroplast thylakoid lumen. The protein is PsbP domain-containing protein 3, chloroplastic (PPD3) of Arabidopsis thaliana (Mouse-ear cress).